A 255-amino-acid chain; its full sequence is Tryptophan synthase alpha chain (255 aa).

Catalysis depends on proton acceptor residues Glu44 and Asp55.

The protein belongs to the TrpA family. Tetramer of two alpha and two beta chains.

The enzyme catalyses (1S,2R)-1-C-(indol-3-yl)glycerol 3-phosphate + L-serine = D-glyceraldehyde 3-phosphate + L-tryptophan + H2O. Its pathway is amino-acid biosynthesis; L-tryptophan biosynthesis; L-tryptophan from chorismate: step 5/5. In terms of biological role, the alpha subunit is responsible for the aldol cleavage of indoleglycerol phosphate to indole and glyceraldehyde 3-phosphate. The polypeptide is Tryptophan synthase alpha chain (Dehalococcoides mccartyi (strain ATCC BAA-2100 / JCM 16839 / KCTC 5957 / BAV1)).